Consider the following 163-residue polypeptide: Nucleotide-binding protein HAPS_2236 (163 aa).

Belongs to the YajQ family.

In terms of biological role, nucleotide-binding protein. The sequence is that of Nucleotide-binding protein HAPS_2236 from Glaesserella parasuis serovar 5 (strain SH0165) (Haemophilus parasuis).